A 320-amino-acid chain; its full sequence is Nod factor export ATP-binding protein I (320 aa).

Residues 15-245 (VSATGVWKKR…LGALKILEID (231 aa)) enclose the ABC transporter domain. ATP is bound at residue 47-54 (GTNGAGKS).

It belongs to the ABC transporter superfamily. Lipooligosaccharide exporter (TC 3.A.1.102) family. In terms of assembly, the complex is composed of two ATP-binding proteins (NodI) and two transmembrane proteins (NodJ).

It is found in the cell inner membrane. Its function is as follows. Part of the ABC transporter complex NodIJ involved in the export of the nodulation factors (Nod factors), the bacterial signal molecules that induce symbiosis and subsequent nodulation induction. Nod factors are LCO (lipo-chitin oligosaccharide), a modified beta-1,4-linked N-acetylglucosamine oligosaccharide. This subunit is responsible for energy coupling to the transport system. The polypeptide is Nod factor export ATP-binding protein I (Azorhizobium caulinodans (strain ATCC 43989 / DSM 5975 / JCM 20966 / LMG 6465 / NBRC 14845 / NCIMB 13405 / ORS 571)).